The chain runs to 72 residues: Small ribosomal subunit protein bS18 (72 aa).

It belongs to the bacterial ribosomal protein bS18 family. Part of the 30S ribosomal subunit. Forms a tight heterodimer with protein bS6.

In terms of biological role, binds as a heterodimer with protein bS6 to the central domain of the 16S rRNA, where it helps stabilize the platform of the 30S subunit. This chain is Small ribosomal subunit protein bS18, found in Fusobacterium nucleatum subsp. nucleatum (strain ATCC 25586 / DSM 15643 / BCRC 10681 / CIP 101130 / JCM 8532 / KCTC 2640 / LMG 13131 / VPI 4355).